The following is a 125-amino-acid chain: Small ribosomal subunit protein uS13 (125 aa).

Residues 91–125 (HRRSLPVRGQNTQTNARTRKGKRKTVAGKKKAARK) are disordered. Positions 107 to 125 (RTRKGKRKTVAGKKKAARK) are enriched in basic residues.

The protein belongs to the universal ribosomal protein uS13 family. As to quaternary structure, part of the 30S ribosomal subunit. Forms a loose heterodimer with protein S19. Forms two bridges to the 50S subunit in the 70S ribosome.

Functionally, located at the top of the head of the 30S subunit, it contacts several helices of the 16S rRNA. In the 70S ribosome it contacts the 23S rRNA (bridge B1a) and protein L5 of the 50S subunit (bridge B1b), connecting the 2 subunits; these bridges are implicated in subunit movement. Contacts the tRNAs in the A and P-sites. The protein is Small ribosomal subunit protein uS13 of Chlorobium phaeovibrioides (strain DSM 265 / 1930) (Prosthecochloris vibrioformis (strain DSM 265)).